We begin with the raw amino-acid sequence, 277 residues long: Large ribosomal subunit protein uL2 (277 aa).

The segment at 226–277 (NPIDHPHGGGEGRTSGGRHPVTPWGKPTKGKKTRSNKSTNKFILISRHKRKK) is disordered.

It belongs to the universal ribosomal protein uL2 family. Part of the 50S ribosomal subunit. Forms a bridge to the 30S subunit in the 70S ribosome.

One of the primary rRNA binding proteins. Required for association of the 30S and 50S subunits to form the 70S ribosome, for tRNA binding and peptide bond formation. It has been suggested to have peptidyltransferase activity; this is somewhat controversial. Makes several contacts with the 16S rRNA in the 70S ribosome. The protein is Large ribosomal subunit protein uL2 of Rhodopseudomonas palustris (strain BisA53).